The primary structure comprises 161 residues: Large ribosomal subunit protein uL15 (161 aa).

The segment covering 1 to 10 has biased composition (basic and acidic residues); the sequence is MKLNELRDNP. Positions 1-42 are disordered; the sequence is MKLNELRDNPGARPKSKRLGRGIGSGKGKTSGKGVKGQKARE. A compositionally biased stretch (gly residues) spans 21–35; it reads RGIGSGKGKTSGKGV.

Belongs to the universal ribosomal protein uL15 family. Part of the 50S ribosomal subunit.

Functionally, binds to the 23S rRNA. The polypeptide is Large ribosomal subunit protein uL15 (Acidiphilium cryptum (strain JF-5)).